Consider the following 414-residue polypeptide: MQHNKLREVRGTKDLLDDELYKFQYIQHLAQTIASRYGFIPVDTPIIEFTEVFTKLGNTSDIVTKEMYNFKDKAGEDITLRPEFTSAIVRLLISKNLTIPVKLFSSGPVFRYERPQKCRQRQFHQINFEFFGSDSPIADVEMISLCYNILSELKLSDRIKLEINFLGDQETINSYKIHLVEYLNKYQKDLSEDSQRRLVVNPLRILDSKSPEDCKILLNAPSISDFYNQNSQNFFKEVLDGLDNLSINYVINHNIVRGLDYYCKTVFEFTTSELGSQNSVIAGGRYDGLVKSMGGHSTPAIGFAAGVERLSALIDYEHKKPKRIVLIPIGDDAISYAIKLAYELRCKGIHVCWNNYRGTSLKNELRKANDTDIVLIFGDEELQSNTVKVKDMKTGDQQNVAVCDLLDNLLYRIV.

The protein belongs to the class-II aminoacyl-tRNA synthetase family. In terms of assembly, homodimer.

It localises to the cytoplasm. It carries out the reaction tRNA(His) + L-histidine + ATP = L-histidyl-tRNA(His) + AMP + diphosphate + H(+). The polypeptide is Histidine--tRNA ligase (Ehrlichia ruminantium (strain Welgevonden)).